The following is an 89-amino-acid chain: Insulin (89 aa).

3 disulfides stabilise this stretch: Cys-7/Cys-75, Cys-19/Cys-88, and Cys-74/Cys-79. A propeptide spans 33 to 66 (DVGPLSAFRDLEPPLDTEMEDRFPYRQQLAGSKM) (c peptide).

This sequence belongs to the insulin family. Heterodimer of a B chain and an A chain linked by two disulfide bonds.

It localises to the secreted. In terms of biological role, insulin decreases blood glucose concentration. It increases cell permeability to monosaccharides, amino acids and fatty acids. It accelerates glycolysis, the pentose phosphate cycle, and glycogen synthesis in liver. The polypeptide is Insulin (ins) (Callorhinchus milii (Ghost shark)).